The following is a 423-amino-acid chain: Phosphoribosylamine--glycine ligase (423 aa).

Residues 107-312 (KAFADRYGLP…LVPYLVACAN (206 aa)) form the ATP-grasp domain. 133-193 (LELFEPPYVI…EEFLEGEIGS (61 aa)) contributes to the ATP binding site. Mg(2+)-binding residues include glutamate 270, glutamate 282, and asparagine 284. Mn(2+) is bound by residues glutamate 270, glutamate 282, and asparagine 284.

This sequence belongs to the GARS family. It depends on Mg(2+) as a cofactor. Mn(2+) serves as cofactor.

The catalysed reaction is 5-phospho-beta-D-ribosylamine + glycine + ATP = N(1)-(5-phospho-beta-D-ribosyl)glycinamide + ADP + phosphate + H(+). It functions in the pathway purine metabolism; IMP biosynthesis via de novo pathway; N(1)-(5-phospho-D-ribosyl)glycinamide from 5-phospho-alpha-D-ribose 1-diphosphate: step 2/2. This Phenylobacterium zucineum (strain HLK1) protein is Phosphoribosylamine--glycine ligase.